A 439-amino-acid chain; its full sequence is Glutamine synthetase (439 aa).

The 82-residue stretch at 12–93 folds into the GS beta-grasp domain; sequence SKIKFVQLVF…VYGFIYKDNK (82 aa). Residues 99–439 enclose the GS catalytic domain; sequence PRGILKRALE…EWELERYFFL (341 aa). Positions 122 and 124 each coordinate Mg(2+). Glutamate 172 contributes to the ATP binding site. Positions 177 and 184 each coordinate Mg(2+). Glycine 229 serves as a coordination point for L-glutamate. Position 233 (histidine 233) interacts with Mg(2+). ATP-binding positions include 235 to 237 and serine 237; that span reads HIS. Residues arginine 283, glutamate 289, and arginine 301 each coordinate L-glutamate. Positions 301, 306, and 313 each coordinate ATP. Glutamate 318 serves as a coordination point for Mg(2+). Position 320 (arginine 320) interacts with L-glutamate.

It belongs to the glutamine synthetase family. In terms of assembly, oligomer of 12 subunits arranged in the form of two hexagons. Requires Mg(2+) as cofactor.

The protein localises to the cytoplasm. It catalyses the reaction L-glutamate + NH4(+) + ATP = L-glutamine + ADP + phosphate + H(+). Functionally, probably involved in nitrogen metabolism via ammonium assimilation. Catalyzes the ATP-dependent biosynthesis of glutamine from glutamate and ammonia. This Pyrococcus furiosus (strain ATCC 43587 / DSM 3638 / JCM 8422 / Vc1) protein is Glutamine synthetase.